The primary structure comprises 282 residues: Acetyl-coenzyme A carboxylase carboxyl transferase subunit beta (282 aa).

Positions 28-282 (IMTKCPSCRT…TKILDIHHVS (255 aa)) constitute a CoA carboxyltransferase N-terminal domain. Zn(2+)-binding residues include Cys-32, Cys-35, Cys-51, and Cys-54. Residues 32 to 54 (CPSCRTIMYTKELKKNLYVCDSC) form a C4-type zinc finger.

The protein belongs to the AccD/PCCB family. As to quaternary structure, acetyl-CoA carboxylase is a heterohexamer composed of biotin carboxyl carrier protein (AccB), biotin carboxylase (AccC) and two subunits each of ACCase subunit alpha (AccA) and ACCase subunit beta (AccD). The cofactor is Zn(2+).

It localises to the cytoplasm. The catalysed reaction is N(6)-carboxybiotinyl-L-lysyl-[protein] + acetyl-CoA = N(6)-biotinyl-L-lysyl-[protein] + malonyl-CoA. Its pathway is lipid metabolism; malonyl-CoA biosynthesis; malonyl-CoA from acetyl-CoA: step 1/1. Component of the acetyl coenzyme A carboxylase (ACC) complex. Biotin carboxylase (BC) catalyzes the carboxylation of biotin on its carrier protein (BCCP) and then the CO(2) group is transferred by the transcarboxylase to acetyl-CoA to form malonyl-CoA. In Halalkalibacterium halodurans (strain ATCC BAA-125 / DSM 18197 / FERM 7344 / JCM 9153 / C-125) (Bacillus halodurans), this protein is Acetyl-coenzyme A carboxylase carboxyl transferase subunit beta.